Here is a 1032-residue protein sequence, read N- to C-terminus: Chitin synthase 8 (1032 aa).

Composition is skewed to pro residues over residues 1–11 and 26–41; these read MRPGDIYPPPQ and PPQP…PPQQ. Residues 1–220 are disordered; that stretch reads MRPGDIYPPP…DDDMNDSHPL (220 aa). Composition is skewed to polar residues over residues 65–78, 98–107, and 143–160; these read MSPT…SRYN, LPTQSLSPFN, and TNPS…SYSY. Asn-78 is a glycosylation site (N-linked (GlcNAc...) asparagine). Residues 176–188 are compositionally biased toward low complexity; sequence PHHSSQSSVSSIP. N-linked (GlcNAc...) asparagine glycosylation is found at Asn-215, Asn-304, Asn-473, Asn-545, and Asn-691. The next 7 membrane-spanning stretches (helical) occupy residues 728–748, 762–782, 796–816, 842–862, 870–890, 972–992, and 995–1015; these read TLNM…FFVL, VNIP…LLSL, SMVG…FLAV, IVIS…MALE, FFQY…YAFC, VLLV…QASG, and NSLA…LAFF.

The protein belongs to the chitin synthase family.

The protein resides in the cell membrane. The enzyme catalyses [(1-&gt;4)-N-acetyl-beta-D-glucosaminyl](n) + UDP-N-acetyl-alpha-D-glucosamine = [(1-&gt;4)-N-acetyl-beta-D-glucosaminyl](n+1) + UDP + H(+). In terms of biological role, polymerizes chitin, a structural polymer of the cell wall and septum, by transferring the sugar moiety of UDP-GlcNAc to the non-reducing end of the growing chitin polymer. The sequence is that of Chitin synthase 8 from Cryptococcus neoformans var. grubii serotype A (strain H99 / ATCC 208821 / CBS 10515 / FGSC 9487) (Filobasidiella neoformans var. grubii).